Here is a 50-residue protein sequence, read N- to C-terminus: MSKLMKGRKIRLAKACEQNRRVPAWVMIKTNRAVASHPKRRNWRRSSLKV.

The protein belongs to the eukaryotic ribosomal protein eL39 family.

This chain is Large ribosomal subunit protein eL39, found in Methanoculleus marisnigri (strain ATCC 35101 / DSM 1498 / JR1).